The sequence spans 331 residues: Ketol-acid reductoisomerase (NADP(+)) (331 aa).

The KARI N-terminal Rossmann domain maps to 2-182; the sequence is ARMYYDEDAN…GGTRAGVLET (181 aa). Residues 25-28, S51, S53, and 83-86 contribute to the NADP(+) site; these read YGSQ and DEVQ. Residue H108 is part of the active site. Residue G134 coordinates NADP(+). The KARI C-terminal knotted domain occupies 183 to 328; that stretch reads TFREETETDL…KDLRAMFSWL (146 aa). Mg(2+) is bound by residues D191, E195, E227, and E231. S252 contributes to the substrate binding site.

This sequence belongs to the ketol-acid reductoisomerase family. Requires Mg(2+) as cofactor.

It catalyses the reaction (2R)-2,3-dihydroxy-3-methylbutanoate + NADP(+) = (2S)-2-acetolactate + NADPH + H(+). It carries out the reaction (2R,3R)-2,3-dihydroxy-3-methylpentanoate + NADP(+) = (S)-2-ethyl-2-hydroxy-3-oxobutanoate + NADPH + H(+). It functions in the pathway amino-acid biosynthesis; L-isoleucine biosynthesis; L-isoleucine from 2-oxobutanoate: step 2/4. Its pathway is amino-acid biosynthesis; L-valine biosynthesis; L-valine from pyruvate: step 2/4. In terms of biological role, involved in the biosynthesis of branched-chain amino acids (BCAA). Catalyzes an alkyl-migration followed by a ketol-acid reduction of (S)-2-acetolactate (S2AL) to yield (R)-2,3-dihydroxy-isovalerate. In the isomerase reaction, S2AL is rearranged via a Mg-dependent methyl migration to produce 3-hydroxy-3-methyl-2-ketobutyrate (HMKB). In the reductase reaction, this 2-ketoacid undergoes a metal-dependent reduction by NADPH to yield (R)-2,3-dihydroxy-isovalerate. This Nostoc punctiforme (strain ATCC 29133 / PCC 73102) protein is Ketol-acid reductoisomerase (NADP(+)).